Reading from the N-terminus, the 631-residue chain is Polycomb group protein EMBRYONIC FLOWER 2 (631 aa).

The C2H2-type zinc finger occupies Phe-324 to His-347. Basic and acidic residues predominate over residues Asp-424 to Gly-446. Residues Asp-424–Ser-465 form a disordered region. A VEFS-box region spans residues Arg-505–Phe-583.

It belongs to the VEFS (VRN2-EMF2-FIS2-SU(Z)12) family. As to quaternary structure, in plants, PcG complexes are probably composed of a member of the EZ family (CLF or MEA), FIE, and a member of the VEFS family (FIS2, VRN2 or EMF2). Binds to ALP1. In terms of tissue distribution, widely expressed throughout the life cycle with higher levels in proliferating tissues. Expressed in both vegetative and the reproductive shoot meristems.

The protein localises to the nucleus. In terms of biological role, polycomb group (PcG) protein. Involved in flowering processes by repressing unknown target genes and preventing reproductive development. Participates in polycomb group (PcG) protein complex-mediated (probably in complex with EMF1) silencing of the flower homeotic genes AGAMOUS (AG), PISTILLATA (PI), and APETALA3 (AP3), as well as of some regulatory genes such as ABSCISIC ACID INSENSITIVE3 (ABI3), LONG VEGETATIVE PHASE1 (LOV1), and FLOWERING LOCUS C (FLC) during vegetative development, by mediating trimethylation of histone 3 lysine 27 on the AG chromatin (H3K27me3). PcG proteins act by forming multiprotein complexes, which are required to maintain the transcriptionally repressive state of homeotic genes throughout development. PcG proteins are not required to initiate repression, but to maintain it during later stages of development. They probably act via the methylation of histones, rendering chromatin heritably changed in its expressibility. The chain is Polycomb group protein EMBRYONIC FLOWER 2 (EMF2) from Arabidopsis thaliana (Mouse-ear cress).